The primary structure comprises 168 residues: Nicotinamide-nucleotide adenylyltransferase (168 aa).

The protein belongs to the archaeal NMN adenylyltransferase family.

Its subcellular location is the cytoplasm. It carries out the reaction beta-nicotinamide D-ribonucleotide + ATP + H(+) = diphosphate + NAD(+). Its pathway is cofactor biosynthesis; NAD(+) biosynthesis; NAD(+) from nicotinamide D-ribonucleotide: step 1/1. The chain is Nicotinamide-nucleotide adenylyltransferase from Methanocorpusculum labreanum (strain ATCC 43576 / DSM 4855 / Z).